The chain runs to 263 residues: uncharacterized protein (263 aa).

The interval 183 to 263 (APHDRPEGVP…PPSTNTKGAA (81 aa)) is disordered. 2 stretches are compositionally biased toward polar residues: residues 230-239 (SRPTAPSRPS) and 253-263 (TPPSTNTKGAA).

Probably does not play a direct role in plasmid integration or excision. This is an uncharacterized protein from Saccharopolyspora erythraea (Streptomyces erythraeus).